We begin with the raw amino-acid sequence, 795 residues long: Probable diacylglycerol kinase 3 (795 aa).

EF-hand domains follow at residues 170-205 (TPEN…MMNV) and 215-250 (ELEQ…NIPL). Residues D183, D185, N187, E194, D228, D230, D232, and E239 each coordinate Ca(2+). 2 Phorbol-ester/DAG-type zinc fingers span residues 265–316 (SHVW…ATNC) and 329–375 (YHHW…AQEC). The region spanning 423 to 558 (NDCRPLLVLV…MDRWQIKIEI (136 aa)) is the DAGKc domain.

It belongs to the eukaryotic diacylglycerol kinase family. Monomer.

It carries out the reaction a 1,2-diacyl-sn-glycerol + ATP = a 1,2-diacyl-sn-glycero-3-phosphate + ADP + H(+). Functionally, involved in AFD-neuron mediated thermotaxis. Regulates behavior to environmental temperature. Thought to have a role in olfactory adaptation by affecting diacylglycerol levels. In Caenorhabditis elegans, this protein is Probable diacylglycerol kinase 3 (dgk-3).